Here is a 235-residue protein sequence, read N- to C-terminus: MKRAPNHPAELARRIGIASEDLATLEMALTHPSFVYENPQAPPEHNQRLEFLGDAVLGLVIGEQLFVRYPTWTEGELSRRRAAVVCEANLADGARRLQLGAWLKLGRGEEASGGREKPSILADALEAVIGAIFLSGGIEAARRFIVDLFGDALANAQNLVSGDNKTAFQEWVQRTGPADIRYCIVDESGPDHDKRFVAAVMVNGTVIADGQGRTKKEAEQQAAGRAMREWAGRKG.

Residues 8–137 enclose the RNase III domain; sequence PAELARRIGI…VIGAIFLSGG (130 aa). Glu50 contributes to the Mg(2+) binding site. Asp54 is a catalytic residue. 2 residues coordinate Mg(2+): Asp123 and Glu126. Residue Glu126 is part of the active site. The DRBM domain occupies 163–232; sequence DNKTAFQEWV…AGRAMREWAG (70 aa). Positions 211–235 are disordered; that stretch reads QGRTKKEAEQQAAGRAMREWAGRKG. Residues 226 to 235 show a composition bias toward basic and acidic residues; the sequence is AMREWAGRKG.

The protein belongs to the ribonuclease III family. In terms of assembly, homodimer. Requires Mg(2+) as cofactor.

The protein resides in the cytoplasm. It carries out the reaction Endonucleolytic cleavage to 5'-phosphomonoester.. Its function is as follows. Digests double-stranded RNA. Involved in the processing of primary rRNA transcript to yield the immediate precursors to the large and small rRNAs (23S and 16S). Processes some mRNAs, and tRNAs when they are encoded in the rRNA operon. Processes pre-crRNA and tracrRNA of type II CRISPR loci if present in the organism. This chain is Ribonuclease 3, found in Heliobacterium modesticaldum (strain ATCC 51547 / Ice1).